Here is a 668-residue protein sequence, read N- to C-terminus: Trehalase (668 aa).

The interval 1 to 23 (MVLQQTEPTDGADRKASDGPLTV) is disordered.

It belongs to the glycosyl hydrolase 15 family. In terms of assembly, homomultimer of 20 or more subunits. Requires Mg(2+) as cofactor. Phosphate serves as cofactor.

It carries out the reaction alpha,alpha-trehalose + H2O = alpha-D-glucose + beta-D-glucose. The protein operates within glycan degradation; trehalose degradation; D-glucose from alpha,alpha-trehalose: step 1/1. Inhibited by pyrophosphate and polyphosphates. Also competitively inhibited by validoxylamine and castanospermine, but not by trehazolin. Catalyzes the hydrolysis of alpha,alpha-trehalose into two molecules of D-glucose. Does not hydrolyze maltose, isomaltose, sucrose, cellobiose, p-nitrophenyl-alpha-D-glucopyranoside, and methyl-alpha-D-glucopyranoside. Is also inactive on alpha,beta-trehalose, beta,beta-trehalose, alpha,alpha-trehalose-6,6'-dibehenate, trehalulose, nigerose, and trehalose dimycolate. The protein is Trehalase of Mycolicibacterium smegmatis (strain ATCC 700084 / mc(2)155) (Mycobacterium smegmatis).